Consider the following 262-residue polypeptide: Lens fiber major intrinsic protein (262 aa).

Topologically, residues 1–9 (MRELRSSSF) are cytoplasmic. The chain crosses the membrane as a helical span at residues 10-29 (WRAILAEFLGSLLYTLLGLG). Topologically, residues 30 to 41 (ASLRWAPGPHGV) are extracellular. A helical membrane pass occupies residues 42–59 (LGSALAFGLAQATLVQAL). The Cytoplasmic portion of the chain corresponds to 60–61 (GH). Positions 62-77 (VSGGHINPAITLAFLL) form an intramembrane region, discontinuously helical. The NPA 1 signature appears at 68-70 (NPA). The Cytoplasmic segment spans residues 78–82 (ASQLS). A helical transmembrane segment spans residues 83–106 (LPRALGYLLAQLLGALAGAGVLYG). Topologically, residues 107-127 (VTPAAVRGTLGLSALHPSVGP) are extracellular. The chain crosses the membrane as a helical span at residues 128–148 (GQGTVVELLLTAQFILCVFAS). Residues 149–156 (FDDRHDGR) lie on the Cytoplasmic side of the membrane. A helical membrane pass occupies residues 157 to 175 (PGSAALPVGFSLALGHLFG). Topologically, residues 176–178 (IPF) are extracellular. Residues 179-193 (TGAGMNPARSFAPAV) constitute an intramembrane region (discontinuously helical). Positions 184–186 (NPA) match the NPA 2 motif. The Extracellular portion of the chain corresponds to 194-200 (ITRNFTN). Residues 201-222 (HWVFWAGPLLGAALAALLYELA) form a helical membrane-spanning segment. Over 223–262 (LCPRARSMAERLAVLRGEPPAAAPPPEPPAEPLELKTQGL) the chain is Cytoplasmic. Residues 227 to 237 (ARSMAERLAVL) form an interaction with CALM region. The interval 240–262 (EPPAAAPPPEPPAEPLELKTQGL) is disordered. Residues 243-253 (AAAPPPEPPAE) show a composition bias toward pro residues.

Belongs to the MIP/aquaporin (TC 1.A.8) family. As to quaternary structure, homotetramer; each monomer provides an independent water pore. Two homotetramers on opposing membranes can dimerize, forming a cell-cell junction. Interacts with CALM; the calcium-calmodulin/CALM complex interacts with the cytoplasmic domains of two aquaporins, leading to channel closure. During early stages of lens development, interacts through its C-terminal region with Cx56 and GJA8/Cx45.6. Major component of lens fiber gap junctions.

It is found in the cell membrane. Its subcellular location is the cell junction. It catalyses the reaction H2O(in) = H2O(out). The water channel activity is inhibited by calcium through calmodulin/CALM. Functionally, aquaporins form homotetrameric transmembrane channels, with each monomer independently mediating water transport across the plasma membrane along its osmotic gradient. Specifically expressed in lens fiber cells, this aquaporin is crucial for maintaining lens water homeostasis and transparency. Beyond water permeability, it also acts as a cell-to-cell adhesion molecule, forming thin junctions between lens fiber cells that are essential for maintaining the ordered structure and transparency of the lens. This Gallus gallus (Chicken) protein is Lens fiber major intrinsic protein.